Reading from the N-terminus, the 450-residue chain is Signal recognition particle 54 kDa protein (450 aa).

GTP is bound by residues 107–114 (GIQGSGKT), 188–192 (DTAGR), and 247–250 (TKLD).

This sequence belongs to the GTP-binding SRP family. SRP54 subfamily. Part of the signal recognition particle protein translocation system, which is composed of SRP and FtsY. Archaeal SRP consists of a 7S RNA molecule of 300 nucleotides and two protein subunits: SRP54 and SRP19.

Its subcellular location is the cytoplasm. It catalyses the reaction GTP + H2O = GDP + phosphate + H(+). Its function is as follows. Involved in targeting and insertion of nascent membrane proteins into the cytoplasmic membrane. Binds to the hydrophobic signal sequence of the ribosome-nascent chain (RNC) as it emerges from the ribosomes. The SRP-RNC complex is then targeted to the cytoplasmic membrane where it interacts with the SRP receptor FtsY. The sequence is that of Signal recognition particle 54 kDa protein from Methanococcus maripaludis (strain C5 / ATCC BAA-1333).